A 147-amino-acid polypeptide reads, in one-letter code: MRTTFLAKPGEIEKKWYIIDAKDVVLGRLSTVVASILRGKNKPTFTPNVDMGDNVIIINASEVKLTGKKATDKVYYHHSNHPGGLKARTAGNYREFNPEKLLELSIHGMLPKNTLGRKQGLNLHVYAGSEHDHAAQKPEALDINKLV.

Belongs to the universal ribosomal protein uL13 family. Part of the 50S ribosomal subunit.

Functionally, this protein is one of the early assembly proteins of the 50S ribosomal subunit, although it is not seen to bind rRNA by itself. It is important during the early stages of 50S assembly. This chain is Large ribosomal subunit protein uL13, found in Leuconostoc mesenteroides subsp. mesenteroides (strain ATCC 8293 / DSM 20343 / BCRC 11652 / CCM 1803 / JCM 6124 / NCDO 523 / NBRC 100496 / NCIMB 8023 / NCTC 12954 / NRRL B-1118 / 37Y).